We begin with the raw amino-acid sequence, 349 residues long: MNGTEGKNFYVPMSNRTGLVRSPFEYPQYYLAEPWQFKILALYLFFLMSMGLPINGLTLVVTAQHKKLRQPLNFILVNLAVAGTIMVCFGFTVTFYTAINGYFVLGPTGCAVEGFMATLGGEVALWSLVVLAIERYIVVCKPMGSFKFSSSHAFAGIAFTWVMALACAAPPLFGWSRYIPEGMQCSCGPDYYTLNPDYNNESYVIYMFVCHFILPVAVIFFTYGRLVCTVKAAAAQQQDSASTQKAEREVTKMVILMVFGFLIAWTPYATVAAWIFFNKGADFSAKFMAIPAFFSKSSALYNPVIYVLLNKQFRNCMLTTIFCGKNPLGDDESSTVSTSKTEVSSVSPA.

Over 1–36 the chain is Extracellular; the sequence is MNGTEGKNFYVPMSNRTGLVRSPFEYPQYYLAEPWQ. N-linked (GlcNAc...) asparagine glycans are attached at residues Asn-2 and Asn-15. The chain crosses the membrane as a helical span at residues 37-61; sequence FKILALYLFFLMSMGLPINGLTLVV. Over 62-73 the chain is Cytoplasmic; it reads TAQHKKLRQPLN. A helical membrane pass occupies residues 74-99; it reads FILVNLAVAGTIMVCFGFTVTFYTAI. The Extracellular portion of the chain corresponds to 100–113; that stretch reads NGYFVLGPTGCAVE. Residues Cys-110 and Cys-187 are joined by a disulfide bond. The chain crosses the membrane as a helical span at residues 114 to 133; sequence GFMATLGGEVALWSLVVLAI. Over 134 to 152 the chain is Cytoplasmic; the sequence is ERYIVVCKPMGSFKFSSSH. A helical transmembrane segment spans residues 153 to 176; that stretch reads AFAGIAFTWVMALACAAPPLFGWS. Residues 177–202 lie on the Extracellular side of the membrane; it reads RYIPEGMQCSCGPDYYTLNPDYNNES. A helical transmembrane segment spans residues 203-230; that stretch reads YVIYMFVCHFILPVAVIFFTYGRLVCTV. Residues 231 to 252 are Cytoplasmic-facing; the sequence is KAAAAQQQDSASTQKAEREVTK. The helical transmembrane segment at 253–276 threads the bilayer; sequence MVILMVFGFLIAWTPYATVAAWIF. Residues 277-284 are Extracellular-facing; that stretch reads FNKGADFS. A helical membrane pass occupies residues 285 to 309; that stretch reads AKFMAIPAFFSKSSALYNPVIYVLL. Position 296 is an N6-(retinylidene)lysine (Lys-296). The Cytoplasmic portion of the chain corresponds to 310 to 349; sequence NKQFRNCMLTTIFCGKNPLGDDESSTVSTSKTEVSSVSPA. The interval 329 to 349 is disordered; the sequence is GDDESSTVSTSKTEVSSVSPA. Residues 334-349 show a composition bias toward low complexity; sequence STVSTSKTEVSSVSPA.

It belongs to the G-protein coupled receptor 1 family. Opsin subfamily. Post-translationally, phosphorylated on some or all of the serine and threonine residues present in the C-terminal region. In terms of tissue distribution, the color pigments are found in the cone photoreceptor cells.

It localises to the membrane. In terms of biological role, visual pigments are the light-absorbing molecules that mediate vision. They consist of an apoprotein, opsin, covalently linked to cis-retinal. The sequence is that of Green-sensitive opsin-1 from Carassius auratus (Goldfish).